The primary structure comprises 837 residues: Putative dimethyl sulfoxide reductase catalytic subunit A (837 aa).

Residues 1-36 (MSDTDLNATRRDVLKSGAVAAVGLSGGGLLSTLQEA) constitute a signal peptide (tat-type signal). The 58-residue stretch at 53–110 (DQVVKTACSPNCRGKCPLDVFVRDGQIKKVEQQVPAAKTFKRGCTLGMTHLQRVYNAD) folds into the 4Fe-4S Mo/W bis-MGD-type domain. The [4Fe-4S] cluster site is built by C60, C64, C68, and C96. N200 serves as a coordination point for Mo-bis(molybdopterin guanine dinucleotide). The disordered stretch occupies residues 813–837 (EHQSNEYTQHNPRGSSGTATDGDSS). Positions 826-837 (GSSGTATDGDSS) are enriched in low complexity.

It belongs to the prokaryotic molybdopterin-containing oxidoreductase family. In terms of assembly, probable multiprotein complex that likely consists of DmsA, DmsB and DmsC. Mo-bis(molybdopterin guanine dinucleotide) is required as a cofactor. It depends on [4Fe-4S] cluster as a cofactor. In terms of processing, predicted to be exported by the Tat system. The position of the signal peptide cleavage has not been experimentally proven.

The protein resides in the cell membrane. It carries out the reaction dimethyl sulfide + a menaquinone + H2O = dimethyl sulfoxide + a menaquinol. Its function is as follows. Dimethyl sulfoxide (DMSO) reductase catalyzes the reduction of dimethyl sulfoxide (DMSO) to dimethyl sulfide (DMS) during anaerobic respiration; it can also use trimethylamine N-oxide (TMAO) as terminal electron acceptor. Required for anaerobic respiration on DMSO and TMAO; subunit A is proposed to be catalytically active. In Halobacterium salinarum (strain ATCC 700922 / JCM 11081 / NRC-1) (Halobacterium halobium), this protein is Putative dimethyl sulfoxide reductase catalytic subunit A (dmsA).